Here is a 586-residue protein sequence, read N- to C-terminus: Arginine--tRNA ligase (586 aa).

The 'HIGH' region signature appears at 133-143 (ANPTGPLNIVS).

It belongs to the class-I aminoacyl-tRNA synthetase family. Monomer.

The protein resides in the cytoplasm. It carries out the reaction tRNA(Arg) + L-arginine + ATP = L-arginyl-tRNA(Arg) + AMP + diphosphate. This Leptospira interrogans serogroup Icterohaemorrhagiae serovar copenhageni (strain Fiocruz L1-130) protein is Arginine--tRNA ligase.